A 209-amino-acid chain; its full sequence is Imidazole glycerol phosphate synthase subunit HisH (209 aa).

Residues 1–205 (MIAIIDYGMG…KGVVETWKSS (205 aa)) enclose the Glutamine amidotransferase type-1 domain. Catalysis depends on Cys-79, which acts as the Nucleophile. Active-site residues include His-180 and Glu-182.

As to quaternary structure, heterodimer of HisH and HisF.

The protein resides in the cytoplasm. The catalysed reaction is 5-[(5-phospho-1-deoxy-D-ribulos-1-ylimino)methylamino]-1-(5-phospho-beta-D-ribosyl)imidazole-4-carboxamide + L-glutamine = D-erythro-1-(imidazol-4-yl)glycerol 3-phosphate + 5-amino-1-(5-phospho-beta-D-ribosyl)imidazole-4-carboxamide + L-glutamate + H(+). The enzyme catalyses L-glutamine + H2O = L-glutamate + NH4(+). The protein operates within amino-acid biosynthesis; L-histidine biosynthesis; L-histidine from 5-phospho-alpha-D-ribose 1-diphosphate: step 5/9. In terms of biological role, IGPS catalyzes the conversion of PRFAR and glutamine to IGP, AICAR and glutamate. The HisH subunit catalyzes the hydrolysis of glutamine to glutamate and ammonia as part of the synthesis of IGP and AICAR. The resulting ammonia molecule is channeled to the active site of HisF. In Bacillus anthracis (strain CDC 684 / NRRL 3495), this protein is Imidazole glycerol phosphate synthase subunit HisH.